Here is a 527-residue protein sequence, read N- to C-terminus: MSKAATVPVAFQDREKPQEVRLSNIMAARSVADAIRTSLGPKGMDKMIQTGKGEVILTNDGATILKHLSVLHPAAKMLVDLSAAQDVEAGDGTTSVVILAGSMLACAEKLLKKGIHPTVIAESFQRAAGFTVDCMKENALAIELSDRESLLRAATTSLNSKIVSQYSNLLAPIAVDAVLKVIDPRVATNVDLKDIRIVKKLGGIIDDTELIPGLALTQTAVKSAGGPTRIEKANIALIQFQLSPPKPDMENQVVVNDYRQMDKILKEERQYLLNMCKKIKKAGANVILIQKSILRDAVNDLALHFLAKLKIMVIKDIERDEVEFICKSTGCKPIADIESFAEDKLGHADLVEETSSSGEKIVKFSGVKNAGKTVSILCRGANLLTLEEAERSLHDALCVIRCLVKQRALIAGGGSPEIEAAQRLLEHARQLEGREAICIRAFSEALEIIPVTLAENAGLNAIQVVTELRSRHANGEKTAGINVRKGIVTNILEENVLQPLLVNISAIQLAAETTKMIMKIDDITLAR.

This sequence belongs to the TCP-1 chaperonin family. In terms of assembly, heterooligomeric complex of about 850 to 900 kDa that forms two stacked rings, 12 to 16 nm in diameter.

It localises to the cytoplasm. Molecular chaperone; assists the folding of proteins upon ATP hydrolysis. Known to play a role, in vitro, in the folding of actin and tubulin. This is T-complex protein 1 subunit delta (cct4) from Schizosaccharomyces pombe (strain 972 / ATCC 24843) (Fission yeast).